A 110-amino-acid chain; its full sequence is Nucleoid-associated protein SYO3AOP1_1366 (110 aa).

The protein belongs to the YbaB/EbfC family. In terms of assembly, homodimer.

Its subcellular location is the cytoplasm. It localises to the nucleoid. Binds to DNA and alters its conformation. May be involved in regulation of gene expression, nucleoid organization and DNA protection. The polypeptide is Nucleoid-associated protein SYO3AOP1_1366 (Sulfurihydrogenibium sp. (strain YO3AOP1)).